We begin with the raw amino-acid sequence, 470 residues long: O-acyltransferase pboC (470 aa).

Residues His149 and Asp386 each act as proton acceptor in the active site.

The protein belongs to the plant acyltransferase family. In terms of assembly, monomer.

Its pathway is secondary metabolite biosynthesis. In terms of biological role, O-acetyltransferase; part of the gene cluster that mediates the biosynthesis of protubonine B, a hydroxylated and diacetylated cyclo-L-Trp-L-Leu derivative. Within the pathway, pboC catalyzes the acetylation of protubonine D at the hydroxy group to produce protubonine C. The first step of the protubonine B synthesis is performed by the nonribosomal peptide synthetase pboA that catalyzes the formation of cyclo-L-Trp-L-Leu by condensing L-Leu with L-Trp. The flavin-dependent monooxygenase pboD is responsible for hydroxylation at C-3 of the indole ring and subsequent formation of the pyrrolidine ring, leadind to protubonine D. Protubonine D is further diacetylated by two acetyltransferases, pboB and pboC, to form the final product protubonine B via protubonine C. The sequence is that of O-acyltransferase pboC from Aspergillus ustus.